The chain runs to 200 residues: Ribonuclease HII (200 aa).

Positions 14–200 (SRLAGVDEVG…FAPVKQWQLL (187 aa)) constitute an RNase H type-2 domain. Residues aspartate 20, glutamate 21, and aspartate 112 each contribute to the a divalent metal cation site.

It belongs to the RNase HII family. Mn(2+) is required as a cofactor. The cofactor is Mg(2+).

The protein localises to the cytoplasm. It carries out the reaction Endonucleolytic cleavage to 5'-phosphomonoester.. Functionally, endonuclease that specifically degrades the RNA of RNA-DNA hybrids. The sequence is that of Ribonuclease HII from Chromohalobacter salexigens (strain ATCC BAA-138 / DSM 3043 / CIP 106854 / NCIMB 13768 / 1H11).